The chain runs to 510 residues: NAD(P)H-quinone oxidoreductase subunit 2 B, chloroplastic (510 aa).

13 helical membrane passes run 24 to 44 (LLLF…GLIL), 57 to 77 (IPWL…ALLF), 99 to 119 (IFQF…VEYI), 124 to 144 (MAIT…MFLC), 149 to 169 (LITI…LSGY), 183 to 203 (YLLM…WLYG), 227 to 247 (PGIS…LSLA), 295 to 315 (WHLL…LIAI), 323 to 343 (MLAY…IVGD), 354 to 374 (YMLF…LFGL), 395 to 415 (ALSL…AGFF), 418 to 438 (LHLF…IGLL), and 482 to 502 (LSMI…NPIV).

It belongs to the complex I subunit 2 family. NDH is composed of at least 16 different subunits, 5 of which are encoded in the nucleus.

The protein resides in the plastid. It is found in the chloroplast thylakoid membrane. The catalysed reaction is a plastoquinone + NADH + (n+1) H(+)(in) = a plastoquinol + NAD(+) + n H(+)(out). It carries out the reaction a plastoquinone + NADPH + (n+1) H(+)(in) = a plastoquinol + NADP(+) + n H(+)(out). Functionally, NDH shuttles electrons from NAD(P)H:plastoquinone, via FMN and iron-sulfur (Fe-S) centers, to quinones in the photosynthetic chain and possibly in a chloroplast respiratory chain. The immediate electron acceptor for the enzyme in this species is believed to be plastoquinone. Couples the redox reaction to proton translocation, and thus conserves the redox energy in a proton gradient. This is NAD(P)H-quinone oxidoreductase subunit 2 B, chloroplastic from Manihot esculenta (Cassava).